We begin with the raw amino-acid sequence, 177 residues long: Inorganic pyrophosphatase (177 aa).

3 residues coordinate substrate: Lys-31, Arg-45, and Tyr-57. The Mg(2+) site is built by Asp-67, Asp-72, and Asp-104. Tyr-141 is a binding site for substrate.

Belongs to the PPase family. As to quaternary structure, homohexamer. Also forms homotrimers, but the trimeric form is 23% less active than the hexamer. In fact, likely forms a dimer of trimers. The cofactor is Mg(2+).

It localises to the cytoplasm. The enzyme catalyses diphosphate + H2O = 2 phosphate + H(+). Inhibited by sodium fluoride (NaF) in vitro, similarly to other class A type inorganic pyrophosphatases. Catalyzes the hydrolysis of inorganic pyrophosphate (PPi) forming two phosphate ions. The hydrolysis of PPi by inorganic pyrophosphatase releases a considerable amount of energy that can drive unfavorable biochemical transformations to completion. Is not active on nucleoside triphosphates (ATP, TTP, GTP, or CTP) or nucleoside diphosphate (ADP). The protein is Inorganic pyrophosphatase of Haloferax volcanii (strain ATCC 29605 / DSM 3757 / JCM 8879 / NBRC 14742 / NCIMB 2012 / VKM B-1768 / DS2) (Halobacterium volcanii).